The following is a 743-amino-acid chain: Homeobox-leucine zipper protein PROTODERMAL FACTOR 2 (743 aa).

The segment at 1–72 is disordered; it reads MYHPNMFESH…KKRYHRHTQR (72 aa). Residues 30-39 are compositionally biased toward basic and acidic residues; that stretch reads SREDDFETKS. Residues 60-71 are compositionally biased toward basic residues; it reads PNKKKRYHRHTQ. A DNA-binding region (homeobox) is located at residues 62–121; sequence KKKRYHRHTQRQIQELESFFKECPHPDDKQRKELSRDLNLEPLQVKFWFQNKRTQMKAQS. The stretch at 110-192 forms a coiled coil; the sequence is FQNKRTQMKA…DRISAIAAKY (83 aa). One can recognise an START domain in the interval 244 to 476; that stretch reads SETDKPIIVE…LERQCERLAS (233 aa).

It belongs to the HD-ZIP homeobox family. Class IV subfamily. As to quaternary structure, interacts with GAI/RGA2, RGA/RGA1/GRS, RGL2/SCL19 and ATML1. Binds to AIL7/PLT7, ANT, BBM and AIL1. In terms of tissue distribution, specifically expressed in the layer 1 (L1) of shoot meristems.

The protein resides in the nucleus. Its function is as follows. Probable transcription factor that binds to the L1 box DNA sequence 5'-TAAATG[CT]A-3'. Plays a role in maintaining the identity of L1 cells, possibly by interacting with their L1 box or other target-gene promoters; binds to the LIP1 gene promoter and stimulates its expression upon imbibition. Acts as a positive regulator of gibberellins (GAs)-regulated epidermal gene expression (e.g. LIP1, LIP2, LTP1, FDH and PDF1). Functionally redundant to ATML1. Involved, together with HDG proteins (e.g. HDG1, HDG2, HDG5 and HDG12), in the regulation of flower organs development by promoting the expression of APETALA 3 (AP3) in the epidermis and internal cell layers of developing flowers. Seems to promote cell differentiation. The polypeptide is Homeobox-leucine zipper protein PROTODERMAL FACTOR 2 (Arabidopsis thaliana (Mouse-ear cress)).